The sequence spans 569 residues: Rab GTPase-binding effector protein 2 (569 aa).

Disordered regions lie at residues 1–41, 180–265, and 388–411; these read MAAA…GELS, IQRR…ETAS, and RAEQLPSSAPQGSQQEQGEEESLP. N-acetylalanine is present on A2. A coiled-coil region spans residues 34–187; it reads EAESGELSRL…QEIQRRPRHA (154 aa). A phosphoserine mark is found at S189 and S193. Position 200 is a phosphoserine; by GSK3-alpha (S200). S204 carries the phosphoserine modification. Composition is skewed to low complexity over residues 245-257 and 393-403; these read SSSSLPQSRQGLS and PSSAPQGSQQE. Positions 289 to 523 form a coiled coil; the sequence is DTQWEQLQTE…LQAELETSEQ (235 aa).

This sequence belongs to the rabaptin family. As to quaternary structure, heterodimer with RABGEF1. The dimer binds RAB5A that has been activated by GTP-binding. Interacts with SDCCAG8; this interaction is important for ciliogenesis regulation. Interacts with RAB4A; this interaction may mediate VEGFR2 cell surface expression.

Its subcellular location is the cytoplasm. The protein localises to the early endosome. It localises to the cytoskeleton. It is found in the microtubule organizing center. The protein resides in the centrosome. Its subcellular location is the cilium basal body. Plays a role in membrane trafficking and in homotypic early endosome fusion. Participates in arteriogenesis by regulating vascular endothelial growth factor receptor 2/VEGFR2 cell surface expression and endosomal trafficking. By interacting with SDCCAG8, localizes to centrosomes and plays a critical role in ciliogenesis. In Homo sapiens (Human), this protein is Rab GTPase-binding effector protein 2 (RABEP2).